A 323-amino-acid polypeptide reads, in one-letter code: Protein MEI2-like 6 (323 aa).

This Oryza sativa subsp. japonica (Rice) protein is Protein MEI2-like 6 (ML6).